A 108-amino-acid chain; its full sequence is T-cell acute lymphocytic leukemia protein 2 (108 aa).

Residues 2-54 form the bHLH domain; that stretch reads TRKIFTNTRERWRQQNVNSAFAKLRKLIPTHPPDKKLSKNETLRLAMRYINFL. Residues 89–108 are disordered; sequence DRTLLENYQVPSPGPSHHIP.

This Homo sapiens (Human) protein is T-cell acute lymphocytic leukemia protein 2 (TAL2).